The chain runs to 529 residues: Cytokinin dehydrogenase 4 (529 aa).

Positions 1–27 are cleaved as a signal peptide; the sequence is MRGAMKPSIVHCLKLLMLLALGGVTMH. In terms of domain architecture, FAD-binding PCMH-type spans 63 to 244; sequence CSLLPAAVLH…TRARIALEPA (182 aa). FAD is bound by residues Ala99, Gly101, and Gly103. His104 is subject to Pros-8alpha-FAD histidine. Positions 105, 109, 168, 173, 179, 183, and 234 each coordinate FAD. 3 N-linked (GlcNAc...) asparagine glycosylation sites follow: Asn285, Asn419, and Asn425. FAD-binding residues include Tyr479 and Gln517.

The protein belongs to the oxygen-dependent FAD-linked oxidoreductase family. Monomer. The cofactor is FAD. Expressed in inflorescence meristems.

The protein resides in the secreted. Its subcellular location is the extracellular space. It carries out the reaction N(6)-dimethylallyladenine + A + H2O = 3-methyl-2-butenal + adenine + AH2. Its function is as follows. Catalyzes the oxidation of cytokinins, a family of N(6)-substituted adenine derivatives that are plant hormones, where the substituent is an isopentenyl group. The sequence is that of Cytokinin dehydrogenase 4 (CKX4) from Oryza sativa subsp. japonica (Rice).